Consider the following 571-residue polypeptide: MGEGEEGDKFPPKTDEVTQESMKSARQLDFTGGSSDVEHSHSNQASSMAAASIPSPIVTVTRPIITSQAPPTVATPIPPPPQSQGIILHVPIRHPRPESPNSMPRPAGETRDGTPQKKKQCNCKHSRCLKLYCECFASGTYCDGCNCVNCFNNVENEPARRQAVESTLERNPNAFRPKIAASPHGGRDNREEVGDVVMLARHNKGCHCKKSGCLKKYCECFQANILCSENCKCLDCKNFEGSEVRQSLFHGEHSHNLAYLQHANAAITGAIGSSGFASAPPPKRRKGQEIFFNQGTKDSSTHRLGQANNGRTTSSQTGSRAGGNASLGPSKVVYKSLLANIIKPMDVKALCSVLVAVAGEAAKTLTEKRLANQKETSVASSVQDQGHVNNKAEKSGLEDSNADGSKGRSLSPETLALMCDERDTMLMVAASPNCSVEPTSQLPNGQDQVYAEQEKVVLTKFRDCLNRIISCGEVKESNCSMSRMDLDTPVQTTVRIDPVVQQAPVANGVSQTAKQPSQLNTTTPNTSSQTANGVSQTAKQPSQLTTTTTTPNTSSQTHLHKTPALSEKKDL.

Disordered regions lie at residues 1–52 (MGEG…AAAS), 92–119 (IRHP…QKKK), 293–325 (NQGT…GGNA), 370–411 (LANQ…RSLS), and 507–571 (NGVS…KKDL). Over residues 7-16 (GDKFPPKTDE) the composition is skewed to basic and acidic residues. Positions 117-241 (KKKQCNCKHS…KCLDCKNFEG (125 aa)) constitute a CRC domain. Polar residues-rich tracts occupy residues 293-319 (NQGT…QTGS), 373-388 (QKET…QGHV), and 508-539 (GVSQ…QTAK). The span at 540 to 557 (QPSQLTTTTTTPNTSSQT) shows a compositional bias: low complexity.

It belongs to the lin-54 family. Ubiquitous but expressed mostly in flowers.

It is found in the nucleus. In terms of biological role, plays a role in development of both male and female reproductive tissues. The chain is Protein tesmin/TSO1-like CXC 6 (TCX6) from Arabidopsis thaliana (Mouse-ear cress).